Here is a 366-residue protein sequence, read N- to C-terminus: Protein CbrA (366 aa).

The protein belongs to the CbrA family.

The polypeptide is Protein CbrA (cbrA) (Escherichia coli O9:H4 (strain HS)).